The sequence spans 418 residues: MTRKDDESDQFFCSFCGKNQKEVKKLIAGPSVYICNECVSLCEEIIEDEDKESLAPAEASDKKLTPREIKDVLDTYVIEQDRAKKVLSVAVYNHYKRLDAEVKSEDDVEIQKSNILLIGPTGCGKTLLAQTLARFLDVPFALADATTLTEAGYVGEDVENIILSLVQNADYDIEKAQRGIIYIDEVDKISQRGDNPSITRDVSGEGVQQALLKIIEGTTASIPPKGGRKHPQQDFVKVETSNILFVCGGTFTGLEKVIERRISQKSMGFGAEVQSRKEKNVGELLEQLKPEDLIKFGLIPEFLGRLPVVTSLSELNEASLVKILTEPKNALLKQYQRLFEFENVKLTFTEEALAAMAKEAVTRRSGARGLRAIMEETMLDIMYELPSTENVRECIVGEEVVLKHEPPILLFEQAKKQA.

The ClpX-type ZB domain occupies 1 to 54 (MTRKDDESDQFFCSFCGKNQKEVKKLIAGPSVYICNECVSLCEEIIEDEDKESL). The Zn(2+) site is built by cysteine 13, cysteine 16, cysteine 35, and cysteine 38. 120-127 (PTGCGKTL) contacts ATP.

The protein belongs to the ClpX chaperone family. As to quaternary structure, component of the ClpX-ClpP complex. Forms a hexameric ring that, in the presence of ATP, binds to fourteen ClpP subunits assembled into a disk-like structure with a central cavity, resembling the structure of eukaryotic proteasomes.

In terms of biological role, ATP-dependent specificity component of the Clp protease. It directs the protease to specific substrates. Can perform chaperone functions in the absence of ClpP. The chain is ATP-dependent Clp protease ATP-binding subunit ClpX from Desulforapulum autotrophicum (strain ATCC 43914 / DSM 3382 / VKM B-1955 / HRM2) (Desulfobacterium autotrophicum).